A 139-amino-acid chain; its full sequence is Transcription antitermination protein NusB (139 aa).

This sequence belongs to the NusB family.

Functionally, involved in transcription antitermination. Required for transcription of ribosomal RNA (rRNA) genes. Binds specifically to the boxA antiterminator sequence of the ribosomal RNA (rrn) operons. The chain is Transcription antitermination protein NusB from Limosilactobacillus fermentum (strain NBRC 3956 / LMG 18251) (Lactobacillus fermentum).